The sequence spans 95 residues: Small ribosomal subunit protein uS19 (95 aa).

This sequence belongs to the universal ribosomal protein uS19 family.

Its function is as follows. Protein S19 forms a complex with S13 that binds strongly to the 16S ribosomal RNA. This chain is Small ribosomal subunit protein uS19, found in Thermosipho africanus (strain TCF52B).